Reading from the N-terminus, the 446-residue chain is UDP-N-acetylmuramoylalanine--D-glutamate ligase (446 aa).

115-121 provides a ligand contact to ATP; that stretch reads GSNGKST.

The protein belongs to the MurCDEF family.

It is found in the cytoplasm. The enzyme catalyses UDP-N-acetyl-alpha-D-muramoyl-L-alanine + D-glutamate + ATP = UDP-N-acetyl-alpha-D-muramoyl-L-alanyl-D-glutamate + ADP + phosphate + H(+). The protein operates within cell wall biogenesis; peptidoglycan biosynthesis. In terms of biological role, cell wall formation. Catalyzes the addition of glutamate to the nucleotide precursor UDP-N-acetylmuramoyl-L-alanine (UMA). This Hahella chejuensis (strain KCTC 2396) protein is UDP-N-acetylmuramoylalanine--D-glutamate ligase.